Here is a 280-residue protein sequence, read N- to C-terminus: Bis(5'-nucleosyl)-tetraphosphatase, symmetrical (280 aa).

The protein belongs to the Ap4A hydrolase family.

The catalysed reaction is P(1),P(4)-bis(5'-adenosyl) tetraphosphate + H2O = 2 ADP + 2 H(+). Hydrolyzes diadenosine 5',5'''-P1,P4-tetraphosphate to yield ADP. The chain is Bis(5'-nucleosyl)-tetraphosphatase, symmetrical from Shigella flexneri serotype 5b (strain 8401).